Here is a 246-residue protein sequence, read N- to C-terminus: Ribonuclease PH (246 aa).

Phosphate-binding positions include Arg91 and 129-131 (GTR).

Belongs to the RNase PH family. Homohexameric ring arranged as a trimer of dimers.

It carries out the reaction tRNA(n+1) + phosphate = tRNA(n) + a ribonucleoside 5'-diphosphate. Phosphorolytic 3'-5' exoribonuclease that plays an important role in tRNA 3'-end maturation. Removes nucleotide residues following the 3'-CCA terminus of tRNAs; can also add nucleotides to the ends of RNA molecules by using nucleoside diphosphates as substrates, but this may not be physiologically important. Probably plays a role in initiation of 16S rRNA degradation (leading to ribosome degradation) during starvation. This is Ribonuclease PH from Burkholderia ambifaria (strain ATCC BAA-244 / DSM 16087 / CCUG 44356 / LMG 19182 / AMMD) (Burkholderia cepacia (strain AMMD)).